We begin with the raw amino-acid sequence, 99 residues long: Large ribosomal subunit protein eL36A (99 aa).

It belongs to the eukaryotic ribosomal protein eL36 family. Component of the large ribosomal subunit (LSU). Mature yeast ribosomes consist of a small (40S) and a large (60S) subunit. The 40S small subunit contains 1 molecule of ribosomal RNA (18S rRNA) and at least 33 different proteins. The large 60S subunit contains 3 rRNA molecules (25S, 5.8S and 5S rRNA) and at least 46 different proteins.

It is found in the cytoplasm. In terms of biological role, component of the ribosome, a large ribonucleoprotein complex responsible for the synthesis of proteins in the cell. The small ribosomal subunit (SSU) binds messenger RNAs (mRNAs) and translates the encoded message by selecting cognate aminoacyl-transfer RNA (tRNA) molecules. The large subunit (LSU) contains the ribosomal catalytic site termed the peptidyl transferase center (PTC), which catalyzes the formation of peptide bonds, thereby polymerizing the amino acids delivered by tRNAs into a polypeptide chain. The nascent polypeptides leave the ribosome through a tunnel in the LSU and interact with protein factors that function in enzymatic processing, targeting, and the membrane insertion of nascent chains at the exit of the ribosomal tunnel. The chain is Large ribosomal subunit protein eL36A (rpl3601) from Schizosaccharomyces pombe (strain 972 / ATCC 24843) (Fission yeast).